A 146-amino-acid polypeptide reads, in one-letter code: Hemoglobin subunit beta (146 aa).

Residues 2–146 (HWTAEEKQLI…VAHALARKYH (145 aa)) enclose the Globin domain. Positions 63 and 92 each coordinate heme b.

Belongs to the globin family. Heterotetramer of two alpha chains and two beta chains. As to expression, red blood cells.

Functionally, involved in oxygen transport from the lung to the various peripheral tissues. In Chloephaga melanoptera (Andean goose), this protein is Hemoglobin subunit beta (HBB).